Reading from the N-terminus, the 827-residue chain is Periplasmic nitrate reductase (827 aa).

Positions 1 to 32 (MNLSRRDFMKANAALAAASVAGLIIPVKNVNA) form a signal peptide, tat-type signal. Residues 37-93 (ITWDKAVCRFCGTGCAVLVGTKDGRVVASQGDPDAEVNRGLNCIKGYFLPKIMYGKD) enclose the 4Fe-4S Mo/W bis-MGD-type domain. [4Fe-4S] cluster is bound by residues cysteine 44, cysteine 47, cysteine 51, and cysteine 79. Mo-bis(molybdopterin guanine dinucleotide) is bound by residues lysine 81, glutamine 148, asparagine 173, cysteine 177, 210-217 (WGSNMAEM), 242-246 (STFEH), 261-263 (QSD), methionine 372, glutamine 376, asparagine 482, 508-509 (SD), lysine 531, aspartate 558, and 717-726 (TGRILEHWHT). Phenylalanine 793 is a substrate binding site. Positions 801 and 818 each coordinate Mo-bis(molybdopterin guanine dinucleotide).

Belongs to the prokaryotic molybdopterin-containing oxidoreductase family. NasA/NapA/NarB subfamily. As to quaternary structure, component of the periplasmic nitrate reductase NapAB complex composed of NapA and NapB. [4Fe-4S] cluster serves as cofactor. It depends on Mo-bis(molybdopterin guanine dinucleotide) as a cofactor. Post-translationally, predicted to be exported by the Tat system. The position of the signal peptide cleavage has not been experimentally proven.

It is found in the periplasm. It carries out the reaction 2 Fe(II)-[cytochrome] + nitrate + 2 H(+) = 2 Fe(III)-[cytochrome] + nitrite + H2O. Functionally, catalytic subunit of the periplasmic nitrate reductase complex NapAB. Receives electrons from NapB and catalyzes the reduction of nitrate to nitrite. This chain is Periplasmic nitrate reductase, found in Histophilus somni (strain 2336) (Haemophilus somnus).